The sequence spans 260 residues: Uroplakin-1b (260 aa).

The Cytoplasmic portion of the chain corresponds to methionine 1–glutamine 12. The helical transmembrane segment at glycine 13–serine 38 threads the bilayer. At aspartate 39–tryptophan 60 the chain is on the extracellular side. A helical membrane pass occupies residues isoleucine 61–methionine 81. The Cytoplasmic segment spans residues lysine 82–lysine 86. A helical transmembrane segment spans residues isoleucine 87–isoleucine 107. Residues threonine 108–histidine 229 are Extracellular-facing. A helical transmembrane segment spans residues alanine 230–glycine 250. The Cytoplasmic portion of the chain corresponds to threonine 251–tyrosine 260.

It belongs to the tetraspanin (TM4SF) family. As to quaternary structure, heterodimer with uroplakin-3A (UPK3A) or uroplakin-3B (UPK3B).

Its subcellular location is the membrane. Component of the asymmetric unit membrane (AUM); a highly specialized biomembrane elaborated by terminally differentiated urothelial cells. This chain is Uroplakin-1b (UPK1B), found in Neovison vison (American mink).